The sequence spans 317 residues: Transaldolase (317 aa).

The active-site Schiff-base intermediate with substrate is K132.

It belongs to the transaldolase family. Type 1 subfamily. As to quaternary structure, homodimer.

The protein resides in the cytoplasm. The catalysed reaction is D-sedoheptulose 7-phosphate + D-glyceraldehyde 3-phosphate = D-erythrose 4-phosphate + beta-D-fructose 6-phosphate. The protein operates within carbohydrate degradation; pentose phosphate pathway; D-glyceraldehyde 3-phosphate and beta-D-fructose 6-phosphate from D-ribose 5-phosphate and D-xylulose 5-phosphate (non-oxidative stage): step 2/3. Its function is as follows. Transaldolase is important for the balance of metabolites in the pentose-phosphate pathway. This Photorhabdus laumondii subsp. laumondii (strain DSM 15139 / CIP 105565 / TT01) (Photorhabdus luminescens subsp. laumondii) protein is Transaldolase.